A 179-amino-acid polypeptide reads, in one-letter code: Transmembrane protein 196 (179 aa).

The next 4 helical transmembrane spans lie at 11–31 (LLVLSVLEIGLGVSSVAVGAV), 44–61 (LGDSSPFLLCGICGILCA), 67–87 (LVMILFSACCICGLIGGILNF), and 100–120 (LYPLHLASMSLACIGIGGCTL).

It is found in the cytoplasm. The protein localises to the membrane. Acts as a tumor suppressor in lung cancer. Inhibits tumor cell growth by inhibiting cell proliferation and migration and promoting cell apoptosis. Inhibits metastasis of lung cancer by suppressing beta-catenin expression in the Wnt/beta-catenin signaling pathway. The polypeptide is Transmembrane protein 196 (TMEM196) (Pongo abelii (Sumatran orangutan)).